Reading from the N-terminus, the 575-residue chain is Physarolisin (575 aa).

An N-terminal signal peptide occupies residues Met-1 to Ala-18. The propeptide at Val-19 to Gly-173 is removed in mature form. A Peptidase S53 domain is found at Tyr-179–Leu-574. An N-linked (GlcNAc...) asparagine glycan is attached at Asn-200. Active-site charge relay system residues include Glu-248 and Asp-252. Residues Asn-262, Asn-307, Asn-380, and Asn-453 are each glycosylated (N-linked (GlcNAc...) asparagine). The Charge relay system role is filled by Ser-484. Ca(2+)-binding residues include Asp-529, Ile-530, Gly-552, and Asp-554.

Ca(2+) is required as a cofactor. Post-translationally, autocatalytically processed. N-glycosylated.

It carries out the reaction Milk clotting activity. Preferential cleavage of 8-Gly-|-Ser-9 in B chain of insulin most rapidly, followed by 11-Leu-|-Val-12, 19-Cys(SO(3)H)-|-Gly and 24-Phe-|-Phe-25. No action on Ac-Phe-Tyr(I)2.. Inhibited by diisopropylfluorophosphate (DFP) and diazoacetyl-D,L-norleucine methyl ester (DAN). The chain is Physarolisin from Physarum polycephalum (Slime mold).